Consider the following 360-residue polypeptide: MTTIQQQRTSLLKGWPQFCEWVTSTNNRIYVGWFGVLMIPCLLAAAACFIVAFIAAPPVDIDGIREPVAGSFLYGNNIISGAVVPSSNAIGLHFYPIWEAATVDEWLYNGGPYQLVIFHFLIGISAYMGRQWELSYRLGMRPWICVAYSAPVSAAFAVFLVYPFGQGSFSDGMPLGISGTFNFMFVFQAEHNILMHPFHMAGVAGMFGGSLFSAMHGSLVTSSLIRETTETESQNYGYKFGQEEETYNIVAAHGYFGRLIFQYASFNNSRSLHFFLAVFPVVCVWLTSMGICTMAFNLNGFNFNQSVVDANGKIVPTWGDVLNRANLGMEVMHERNAHNFPLDLAAAESTTVALTAPAIG.

3 helical membrane-spanning segments follow: residues 30 to 47, 119 to 134, and 143 to 157; these read YVGW…AAAA, HFLI…QWEL, and WICV…AAFA. His-119 provides a ligand contact to chlorophyll a. Tyr-127 contributes to the pheophytin a binding site. The [CaMn4O5] cluster site is built by Asp-171 and Glu-190. A helical membrane pass occupies residues 198-219; it reads FHMAGVAGMFGGSLFSAMHGSL. Residue His-199 coordinates chlorophyll a. Residues His-216 and 265-266 contribute to the a quinone site; that span reads SF. His-216 provides a ligand contact to Fe cation. His-273 is a Fe cation binding site. The chain crosses the membrane as a helical span at residues 275-289; the sequence is FLAVFPVVCVWLTSM. Residues His-333, Glu-334, Asp-343, and Ala-345 each coordinate [CaMn4O5] cluster. Residues 346-360 constitute a propeptide that is removed on maturation; it reads AAESTTVALTAPAIG.

The protein belongs to the reaction center PufL/M/PsbA/D family. As to quaternary structure, PSII is composed of 1 copy each of membrane proteins PsbA, PsbB, PsbC, PsbD, PsbE, PsbF, PsbH, PsbI, PsbJ, PsbK, PsbL, PsbM, PsbT, PsbX, PsbY, Psb30/Ycf12, peripheral proteins PsbO, CyanoQ (PsbQ), PsbU, PsbV and a large number of cofactors. It forms dimeric complexes. Requires The D1/D2 heterodimer binds P680, chlorophylls that are the primary electron donor of PSII, and subsequent electron acceptors. It shares a non-heme iron and each subunit binds pheophytin, quinone, additional chlorophylls, carotenoids and lipids. D1 provides most of the ligands for the Mn4-Ca-O5 cluster of the oxygen-evolving complex (OEC). There is also a Cl(-1) ion associated with D1 and D2, which is required for oxygen evolution. The PSII complex binds additional chlorophylls, carotenoids and specific lipids. as cofactor. In terms of processing, tyr-162 forms a radical intermediate that is referred to as redox-active TyrZ, YZ or Y-Z. C-terminally processed by CtpA; processing is essential to allow assembly of the oxygen-evolving complex and thus photosynthetic growth.

It is found in the cellular thylakoid membrane. The catalysed reaction is 2 a plastoquinone + 4 hnu + 2 H2O = 2 a plastoquinol + O2. In terms of biological role, photosystem II (PSII) is a light-driven water:plastoquinone oxidoreductase that uses light energy to abstract electrons from H(2)O, generating O(2) and a proton gradient subsequently used for ATP formation. It consists of a core antenna complex that captures photons, and an electron transfer chain that converts photonic excitation into a charge separation. The D1/D2 (PsbA/PsbD) reaction center heterodimer binds P680, the primary electron donor of PSII as well as several subsequent electron acceptors. The chain is Photosystem II protein D1 from Prochlorococcus marinus (strain MIT 9515).